The following is a 287-amino-acid chain: Lipoyl synthase (287 aa).

[4Fe-4S] cluster is bound by residues C34, C39, C45, C60, C64, C67, and S273. Residues 46-262 (WNKRHATVMI…KYIAYSKGFL (217 aa)) enclose the Radical SAM core domain.

It belongs to the radical SAM superfamily. Lipoyl synthase family. The cofactor is [4Fe-4S] cluster.

The protein resides in the cytoplasm. The catalysed reaction is [[Fe-S] cluster scaffold protein carrying a second [4Fe-4S](2+) cluster] + N(6)-octanoyl-L-lysyl-[protein] + 2 oxidized [2Fe-2S]-[ferredoxin] + 2 S-adenosyl-L-methionine + 4 H(+) = [[Fe-S] cluster scaffold protein] + N(6)-[(R)-dihydrolipoyl]-L-lysyl-[protein] + 4 Fe(3+) + 2 hydrogen sulfide + 2 5'-deoxyadenosine + 2 L-methionine + 2 reduced [2Fe-2S]-[ferredoxin]. The protein operates within protein modification; protein lipoylation via endogenous pathway; protein N(6)-(lipoyl)lysine from octanoyl-[acyl-carrier-protein]: step 2/2. Its function is as follows. Catalyzes the radical-mediated insertion of two sulfur atoms into the C-6 and C-8 positions of the octanoyl moiety bound to the lipoyl domains of lipoate-dependent enzymes, thereby converting the octanoylated domains into lipoylated derivatives. The sequence is that of Lipoyl synthase from Wolbachia sp. subsp. Drosophila simulans (strain wRi).